A 461-amino-acid chain; its full sequence is uncharacterized protein (461 aa).

A compositionally biased stretch (basic and acidic residues) spans 1–19 (MEKCSHESGRHSAENDGKY). The segment at 1–21 (MEKCSHESGRHSAENDGKYDI) is disordered.

It belongs to the CapA family.

Functionally, could be involved in the biosynthesis of a cell wall component. This is an uncharacterized protein from Sinorhizobium fredii (strain NBRC 101917 / NGR234).